The primary structure comprises 676 residues: Electrogenic aspartate/glutamate antiporter SLC25A12, mitochondrial (676 aa).

Alanine 2 is subject to N-acetylalanine. The segment at 2–293 is regulatory N-terminal domain; the sequence is AVKVHTTKRG…TLADIERIAP (292 aa). Topologically, residues 2–328 are mitochondrial intermembrane; sequence AVKVHTTKRG…WLQIAESAYR (327 aa). Aspartate 65, threonine 67, aspartate 69, leucine 71, and glutamate 76 together coordinate Ca(2+). EF-hand domains follow at residues 65 to 76, 86 to 121, 125 to 155, and 157 to 192; these read DQTKDGLISYQE, APDS…TIIH, PFNW…QFLQ, and LQLE…IRSH. The segment at 294-309 is linker loop domain; it reads LAEGALPYNLAELQRQ. A carrier domain region spans residues 319–611; that stretch reads WLQIAESAYR…RWFYIDFGGL (293 aa). Solcar repeat units follow at residues 323 to 415, 423 to 507, and 515 to 603; these read AESA…VRDK, IPLP…CKLL, and VGGI…LQRW. Residues 329 to 346 form a helical membrane-spanning segment; it reads FTLGSVAGAVGATAVYPI. Topologically, residues 347–389 are mitochondrial matrix; sequence DLVKTRMQNQRGTGSVVGELMYKNSFDCFKKVLRYEGFFGLYR. The helical transmembrane segment at 390–409 threads the bilayer; sequence GLIPQLIGVAPEKAIKLTVN. Residues 410 to 432 are Mitochondrial intermembrane-facing; the sequence is DFVRDKFTRRDGSIPLPAEILAG. A helical membrane pass occupies residues 433 to 446; that stretch reads GCAGGSQVIFTNPL. The Mitochondrial matrix segment spans residues 447–481; that stretch reads EIVKIRLQVAGEITTGPRVSALNVLQDLGLFGLYK. A helical membrane pass occupies residues 482–501; sequence GAKACFLRDIPFSAIYFPVY. Topologically, residues 502 to 520 are mitochondrial intermembrane; it reads AHCKLLLADENGHVGGINL. Residues 521-538 traverse the membrane as a helical segment; sequence LTAGAMAGVPAASLVTPA. Topologically, residues 539 to 577 are mitochondrial matrix; it reads DVIKTRLQVAARAGQTTYSGVIDCFRKILREEGPSAFWK. A helical transmembrane segment spans residues 578 to 597; sequence GTAARVFRSSPQFGVTLVTY. Over 598–676 the chain is Mitochondrial intermembrane; the sequence is ELLQRWFYID…AQPKVAAAAQ (79 aa). The segment at 612–674 is C-terminal domain; sequence KPSGSEPTPK…AAAQPKVAAA (63 aa).

It belongs to the mitochondrial carrier (TC 2.A.29) family. As to quaternary structure, homodimer (via N-terminus).

It is found in the mitochondrion inner membrane. It catalyses the reaction L-aspartate(in) + L-glutamate(out) + H(+)(out) = L-aspartate(out) + L-glutamate(in) + H(+)(in). The catalysed reaction is 3-sulfino-L-alanine(out) + L-glutamate(in) + H(+)(in) = 3-sulfino-L-alanine(in) + L-glutamate(out) + H(+)(out). It carries out the reaction 3-sulfino-L-alanine(out) + L-aspartate(in) = 3-sulfino-L-alanine(in) + L-aspartate(out). With respect to regulation, L-aspartate and 3-sulfino-L-alanine uptake are both inhibited by glisoxepide. Mitochondrial electrogenic aspartate/glutamate antiporter that favors efflux of aspartate and entry of glutamate and proton within the mitochondria as part of the malate-aspartate shuttle. Also mediates the uptake of L-cysteinesulfinate (3-sulfino-L-alanine) by mitochondria in exchange of L-glutamate and proton. Can also exchange L-cysteinesulfinate with aspartate in their anionic form without any proton translocation. Lacks transport activity towards L-glutamine or gamma-aminobutyric acid (GABA). The sequence is that of Electrogenic aspartate/glutamate antiporter SLC25A12, mitochondrial from Rattus norvegicus (Rat).